The sequence spans 107 residues: UPF0060 membrane protein RPB_2370 (107 aa).

The next 4 membrane-spanning stretches (helical) occupy residues 5-25 (IIYV…WGWL), 31-51 (VWWL…LTLV), 61-81 (AAYG…VEGV), and 85-105 (RWDV…LWGP).

Belongs to the UPF0060 family.

Its subcellular location is the cell inner membrane. The polypeptide is UPF0060 membrane protein RPB_2370 (Rhodopseudomonas palustris (strain HaA2)).